Consider the following 815-residue polypeptide: Protein SMAX1-LIKE 3 (815 aa).

One can recognise a Clp R domain in the interval 8–171 (VEQALTADAA…TKVEQAVSLE (164 aa)). 2 repeat regions span residues 12–80 (LTAD…LNRL) and 99–171 (ISNA…VSLE). The interval 750–769 (SRACSPPSNQKSDGSDQPED) is disordered. An EAR motif is present at residues 778–782 (LDLNL).

The protein belongs to the ClpA/ClpB family. Interacts probably with TPL/TPR in an EAR-motif dependent manner. Expressed in roots and seedlings.

Functionally, may function in a transcriptional corepressor complex. This chain is Protein SMAX1-LIKE 3, found in Arabidopsis thaliana (Mouse-ear cress).